The chain runs to 138 residues: Large ribosomal subunit protein uL16 (138 aa).

Residues 1-16 (MLIPRRVKHRKQHHPS) show a composition bias toward basic residues. Residues 1–25 (MLIPRRVKHRKQHHPSRSGAAKGGT) form a disordered region.

It belongs to the universal ribosomal protein uL16 family. Part of the 50S ribosomal subunit.

Its function is as follows. Binds 23S rRNA and is also seen to make contacts with the A and possibly P site tRNAs. The chain is Large ribosomal subunit protein uL16 from Rhodococcus erythropolis (strain PR4 / NBRC 100887).